We begin with the raw amino-acid sequence, 351 residues long: Fe(3+) ions import ATP-binding protein FbpC (351 aa).

An ABC transporter domain is found at 7 to 237; the sequence is VVLKNICKRF…PKSMFMANFM (231 aa). 39-46 is an ATP binding site; it reads GPSGCGKT.

This sequence belongs to the ABC transporter superfamily. Fe(3+) ion importer (TC 3.A.1.10) family. The complex is composed of two ATP-binding proteins (FbpC), two transmembrane proteins (FbpB) and a solute-binding protein (FbpA).

It localises to the cell inner membrane. The catalysed reaction is Fe(3+)(out) + ATP + H2O = Fe(3+)(in) + ADP + phosphate + H(+). Functionally, part of the ABC transporter complex FbpABC involved in Fe(3+) ions import. Responsible for energy coupling to the transport system. In Vibrio cholerae serotype O1 (strain ATCC 39315 / El Tor Inaba N16961), this protein is Fe(3+) ions import ATP-binding protein FbpC.